A 157-amino-acid chain; its full sequence is Probable calcium-binding protein CML15 (157 aa).

EF-hand domains follow at residues 3 to 38 (DQIR…LGLK), 39 to 74 (PSGD…DLNE), 78 to 113 (INSE…MGQP), and 114 to 149 (LTYK…SAVD). The Ca(2+) site is built by D16, D18, D20, S22, E27, D52, N54, N56, E63, D91, D93, N95, E102, D127, N129, D131, and E138.

Potential calcium sensor. In Arabidopsis thaliana (Mouse-ear cress), this protein is Probable calcium-binding protein CML15 (CML15).